A 374-amino-acid polypeptide reads, in one-letter code: Anhydro-N-acetylmuramic acid kinase (374 aa).

ATP is bound at residue 12–19 (GTSLDGVD).

It belongs to the anhydro-N-acetylmuramic acid kinase family.

It catalyses the reaction 1,6-anhydro-N-acetyl-beta-muramate + ATP + H2O = N-acetyl-D-muramate 6-phosphate + ADP + H(+). Its pathway is amino-sugar metabolism; 1,6-anhydro-N-acetylmuramate degradation. It participates in cell wall biogenesis; peptidoglycan recycling. Catalyzes the specific phosphorylation of 1,6-anhydro-N-acetylmuramic acid (anhMurNAc) with the simultaneous cleavage of the 1,6-anhydro ring, generating MurNAc-6-P. Is required for the utilization of anhMurNAc either imported from the medium or derived from its own cell wall murein, and thus plays a role in cell wall recycling. In Enterobacter sp. (strain 638), this protein is Anhydro-N-acetylmuramic acid kinase.